Here is a 350-residue protein sequence, read N- to C-terminus: Protein RecA (350 aa).

ATP is bound at residue 65-72; it reads GPESSGKT. The disordered stretch occupies residues 329 to 350; the sequence is ASPDVKANPVKETEDDMADADI. Residues 341–350 are compositionally biased toward acidic residues; sequence TEDDMADADI.

It belongs to the RecA family.

Its subcellular location is the cytoplasm. In terms of biological role, can catalyze the hydrolysis of ATP in the presence of single-stranded DNA, the ATP-dependent uptake of single-stranded DNA by duplex DNA, and the ATP-dependent hybridization of homologous single-stranded DNAs. It interacts with LexA causing its activation and leading to its autocatalytic cleavage. This is Protein RecA from Pseudomonas fluorescens (strain ATCC BAA-477 / NRRL B-23932 / Pf-5).